The following is a 219-amino-acid chain: Ribose-5-phosphate isomerase A (219 aa).

Residues 28 to 31, 81 to 84, and 94 to 97 contribute to the substrate site; these read TGST, DGAD, and KGGG. Catalysis depends on Glu103, which acts as the Proton acceptor. Residue Lys121 coordinates substrate.

It belongs to the ribose 5-phosphate isomerase family. In terms of assembly, homodimer.

The catalysed reaction is aldehydo-D-ribose 5-phosphate = D-ribulose 5-phosphate. It functions in the pathway carbohydrate degradation; pentose phosphate pathway; D-ribose 5-phosphate from D-ribulose 5-phosphate (non-oxidative stage): step 1/1. Its function is as follows. Catalyzes the reversible conversion of ribose-5-phosphate to ribulose 5-phosphate. This is Ribose-5-phosphate isomerase A from Shewanella frigidimarina (strain NCIMB 400).